We begin with the raw amino-acid sequence, 200 residues long: Large ribosomal subunit protein uL4 (200 aa).

Positions 43 to 67 (RAQKTRAEVSGSGKKPWRQKGTGRA) are disordered.

Belongs to the universal ribosomal protein uL4 family. As to quaternary structure, part of the 50S ribosomal subunit.

Its function is as follows. One of the primary rRNA binding proteins, this protein initially binds near the 5'-end of the 23S rRNA. It is important during the early stages of 50S assembly. It makes multiple contacts with different domains of the 23S rRNA in the assembled 50S subunit and ribosome. Forms part of the polypeptide exit tunnel. This Haemophilus influenzae (strain PittEE) protein is Large ribosomal subunit protein uL4.